The following is a 378-amino-acid chain: Lactosylceramide 1,3-N-acetyl-beta-D-glucosaminyltransferase (378 aa).

The Cytoplasmic segment spans residues 1 to 14; that stretch reads MRMLVSGRRVKKWQ. The helical; Signal-anchor for type II membrane protein transmembrane segment at 15–35 threads the bilayer; that stretch reads LIIQLFATCFLASLMFFWEPI. Over 36–378 the chain is Lumenal; the sequence is DNHIVSHMKS…DTYPCRAAFI (343 aa). The N-linked (GlcNAc...) asparagine glycan is linked to N59.

It belongs to the glycosyltransferase 31 family. As to expression, widely expressed. Highly expressed in lung, colon, placenta, testis, pituitary gland and cerebellum. Weakly expressed in brain, liver, spleen, lymph node and thymus.

The protein resides in the golgi apparatus membrane. The catalysed reaction is a beta-D-Gal-(1-&gt;4)-beta-D-Glc-(1&lt;-&gt;1)-Cer(d18:1(4E)) + UDP-N-acetyl-alpha-D-glucosamine = a beta-D-GlcNAc-(1-&gt;3)-beta-D-Gal-(1-&gt;4)-beta-D-Glc-(1&lt;-&gt;1)-Cer(d18:1(4E)) + UDP + H(+). It catalyses the reaction a neolactoside nLc4Cer(d18:1(4E)) + UDP-N-acetyl-alpha-D-glucosamine = a neolactoside IV(3)-beta-GlcNAc-nLc4Cer(d18:1(4E)) + UDP + H(+). It functions in the pathway protein modification; protein glycosylation. In terms of biological role, beta-1,3-N-acetylglucosaminyltransferase that plays a key role in the synthesis of lacto- or neolacto-series carbohydrate chains on glycolipids, notably by participating in biosynthesis of HNK-1 and Lewis X carbohydrate structures. Has strong activity toward lactosylceramide (LacCer) and neolactotetraosylceramide (nLc(4)Cer; paragloboside), resulting in the synthesis of Lc(3)Cer and neolactopentaosylceramide (nLc(5)Cer), respectively. Probably plays a central role in regulating neolacto-series glycolipid synthesis during embryonic development. This chain is Lactosylceramide 1,3-N-acetyl-beta-D-glucosaminyltransferase, found in Homo sapiens (Human).